Here is a 735-residue protein sequence, read N- to C-terminus: Muskelin (735 aa).

At alanine 2 the chain carries N-acetylalanine. Residues 172 to 204 (REQEAIRLCLKHFRQHNYTEAFESLQKKTKIAL) enclose the LisH domain. Positions 206 to 258 (HPMLTDIHDKLVLKGDFDACEELIEKAVNDGLFNQYISQQEYKPRWSQIIPKS) constitute a CTLH domain. Kelch repeat units lie at residues 284-330 (TVYL…SCHK), 339-391 (QIYT…FDHQ), 408-458 (ILTC…SRIG), 469-515 (CLYV…TGFT), 526-578 (EIHV…SLQE), and 597-651 (VHYL…AQVD).

Homodimer; may form higher oligomers. Identified in the CTLH complex that contains GID4, RANBP9 and/or RANBP10, MKLN1, MAEA, RMND5A (or alternatively its paralog RMND5B), GID8, ARMC8, WDR26 and YPEL5. Within this complex, MAEA, RMND5A (or alternatively its paralog RMND5B), GID8, WDR26, and RANBP9 and/or RANBP10 form the catalytic core, while GID4, MKLN1, ARMC8 and YPEL5 have ancillary roles. Interacts with RANBP9. Part of a complex consisting of RANBP9, MKLN1 and GID8. Interacts with GABRA1. Interacts with the C-terminal tail of PTGER3.

Its subcellular location is the cytoplasm. It is found in the cytosol. It localises to the nucleus. The protein resides in the nucleoplasm. The protein localises to the cell projection. Its subcellular location is the ruffle. It is found in the cell cortex. It localises to the synapse. The protein resides in the postsynapse. In terms of biological role, component of the CTLH E3 ubiquitin-protein ligase complex that selectively accepts ubiquitin from UBE2H and mediates ubiquitination and subsequent proteasomal degradation of the transcription factor HBP1. Required for internalization of the GABA receptor GABRA1 from the cell membrane via endosomes and subsequent GABRA1 degradation. Acts as a mediator of cell spreading and cytoskeletal responses to the extracellular matrix component THBS1. In Homo sapiens (Human), this protein is Muskelin (MKLN1).